Reading from the N-terminus, the 387-residue chain is Methyltransferase phomM' (387 aa).

Residues 98 to 223 (PHRPKDLHIL…QSVADLFTTL (126 aa)) are methyltransferase domain.

The protein belongs to the class I-like SAM-binding methyltransferase superfamily. Erg6/SMT family.

Its pathway is mycotoxin biosynthesis. Functionally, methyltransferase; part of the gene cluster that mediates the biosynthesis of the phomopsins, a group of hexapeptide mycotoxins which infects lupins and causes lupinosis disease in livestock. Within the pathway, phomM' acts as an S-adenosylmethionine-dependent alpha-N-methyltransferase that catalyzes two successive N-methylation reactions, converting N-desmethyl-phomopsin A to phomopsin A and phomopsin A further to an N,N-dimethylated congener called phomopsin E. The pathway starts with the processing of the precursor phomA' by several endopeptidases including kexin proteases as well as the cluster-specific S41 family peptidase phomP1 and the oligopeptidase phomG' to produce 10 identical copies of the hexapeptide Tyr-Val-Ile-Pro-Ile-Asp. After being excised from the precursor peptide, the core peptides are cyclized and modified post-translationally by enzymes encoded within the gene cluster. The timing and order of proteolysis of the phomA' precursor and PTMs are still unknown. Two tyrosinase-like enzymes, phomQ1' and phomQ2, catalyze the chlorination and hydroxylation of Tyr, respectively. PhomYb, is proposed to be involved in the construction of the macrocyclic structure. The other 4 ustYa family proteins may be involved in PTMs that generate the unique structure of phomopsin A. PhomYa' is required for the hydroxylation of C-beta of Tyr. PhomYc', phomYd', and phomYe are responsible for the biosynthesis of 2,3-dehydroisoleucine (dIle), 2,3-dehydroaspartic acid (dAsp), and 3,4-dehydroproline (dPro), respectively. While dIle formation by phomYc' is indispensable for the installation of dAsp by phomYd', the order of the other PTMs have not been elucidated yet. Most of the biosynthetic enzymes likely have broad substrate specificity, and thus, there might be a metabolic grid from a precursor to phomopsin A. The enzyme(s) responsible for the biosynthesis of 3,4-dehydrovaline (dVal) have also not been identified yet. Finally, phomM' acts as an S-adenosylmethionine-dependent alpha-N-methyltransferase that catalyzes two successive N-methylation reactions, converting N-desmethyl-phomopsin A to phomopsin A and phomopsin A further to an N,N-dimethylated congener called phomopsin E. The chain is Methyltransferase phomM' from Diaporthe leptostromiformis (Lupinosis disease fungus).